A 93-amino-acid polypeptide reads, in one-letter code: Cobalt transport protein CbiN (93 aa).

2 consecutive transmembrane segments (helical) span residues 5–25 (LMLLAMVVALVILPFFINHGG) and 63–83 (LLFTLQGSLGAAVIFYILGYC).

This sequence belongs to the CbiN family. As to quaternary structure, forms an energy-coupling factor (ECF) transporter complex composed of an ATP-binding protein (A component, CbiO), a transmembrane protein (T component, CbiQ) and 2 possible substrate-capture proteins (S components, CbiM and CbiN) of unknown stoichimetry.

The protein resides in the cell inner membrane. It functions in the pathway cofactor biosynthesis; adenosylcobalamin biosynthesis. Part of the energy-coupling factor (ECF) transporter complex CbiMNOQ involved in cobalt import. The protein is Cobalt transport protein CbiN of Salmonella gallinarum (strain 287/91 / NCTC 13346).